Reading from the N-terminus, the 357-residue chain is Glutamine synthetase root isozyme 5 (357 aa).

The GS beta-grasp domain occupies 19–99; that stretch reads IIAEYIWVGG…VMCDCYTPQG (81 aa). The GS catalytic domain occupies 106–357; it reads KRYKAATVFS…ADTTILWKGN (252 aa).

The protein belongs to the glutamine synthetase family. As to quaternary structure, homooctamer. Found mainly in the cortical tissues of seedling roots, stem and seedling shoot.

The protein localises to the cytoplasm. It catalyses the reaction L-glutamate + NH4(+) + ATP = L-glutamine + ADP + phosphate + H(+). In terms of biological role, plays a role in the flow of nitrogen into nitrogenous organic compounds. The polypeptide is Glutamine synthetase root isozyme 5 (GS1-5) (Zea mays (Maize)).